Consider the following 302-residue polypeptide: ATP synthase gamma chain, sodium ion specific (302 aa).

Belongs to the ATPase gamma chain family. As to quaternary structure, F-type ATPases have 2 components, CF(1) - the catalytic core - and CF(0) - the membrane proton channel. CF(1) has five subunits: alpha(3), beta(3), gamma(1), delta(1), epsilon(1). CF(0) has three main subunits: a, b and c.

Its subcellular location is the cell membrane. Inhibited by nitrate. Its function is as follows. Produces ATP from ADP in the presence of a proton gradient across the membrane. The gamma chain is believed to be important in regulating ATPase activity and the flow of protons through the CF(0) complex. This Acetobacterium woodii (strain ATCC 29683 / DSM 1030 / JCM 2381 / KCTC 1655 / WB1) protein is ATP synthase gamma chain, sodium ion specific (atpG).